We begin with the raw amino-acid sequence, 242 residues long: Orotidine 5'-phosphate decarboxylase (242 aa).

Substrate-binding positions include Asp16, Lys37, 64 to 73 (DLKFHDIPNT), Thr128, Arg190, Gln199, Gly219, and Arg220. Lys66 acts as the Proton donor in catalysis.

This sequence belongs to the OMP decarboxylase family. Type 1 subfamily. Homodimer.

It carries out the reaction orotidine 5'-phosphate + H(+) = UMP + CO2. It functions in the pathway pyrimidine metabolism; UMP biosynthesis via de novo pathway; UMP from orotate: step 2/2. Catalyzes the decarboxylation of orotidine 5'-monophosphate (OMP) to uridine 5'-monophosphate (UMP). In Prochlorococcus marinus (strain MIT 9215), this protein is Orotidine 5'-phosphate decarboxylase.